The primary structure comprises 242 residues: Uridylate kinase (242 aa).

ATP is bound at residue 11–14; that stretch reads KLSG. The tract at residues 19–24 is involved in allosteric activation by GTP; that stretch reads GDKGVG. Residue Gly53 coordinates UMP. Positions 54 and 58 each coordinate ATP. Residues Asp73 and 134–141 each bind UMP; that span reads IGSPYFST. ATP is bound by residues Asn162, Tyr168, and Asp171.

This sequence belongs to the UMP kinase family. Homohexamer.

The protein resides in the cytoplasm. The catalysed reaction is UMP + ATP = UDP + ADP. The protein operates within pyrimidine metabolism; CTP biosynthesis via de novo pathway; UDP from UMP (UMPK route): step 1/1. Its activity is regulated as follows. Allosterically activated by GTP. Inhibited by UTP. Catalyzes the reversible phosphorylation of UMP to UDP. This chain is Uridylate kinase, found in Streptococcus agalactiae serotype Ia (strain ATCC 27591 / A909 / CDC SS700).